The following is a 166-amino-acid chain: Small ribosomal subunit protein uS5 (166 aa).

Residues 11 to 74 form the S5 DRBM domain; sequence LQEKLIAVNR…EKARRNMINV (64 aa).

This sequence belongs to the universal ribosomal protein uS5 family. In terms of assembly, part of the 30S ribosomal subunit. Contacts proteins S4 and S8.

Its function is as follows. With S4 and S12 plays an important role in translational accuracy. In terms of biological role, located at the back of the 30S subunit body where it stabilizes the conformation of the head with respect to the body. This chain is Small ribosomal subunit protein uS5, found in Mannheimia succiniciproducens (strain KCTC 0769BP / MBEL55E).